A 305-amino-acid chain; its full sequence is Protoheme IX farnesyltransferase 1 (305 aa).

Helical transmembrane passes span 30 to 50, 59 to 79, 108 to 128, 129 to 149, 154 to 176, 180 to 202, 232 to 252, 253 to 273, and 284 to 304; these read IGIV…AFQF, LDVI…SGAM, FVLT…FAAS, FAAG…YSMW, HVSN…FAAV, LGPG…FYAL, LFWI…GIGF, LTLA…GFTA, and FIYS…FAVF.

Belongs to the UbiA prenyltransferase family. Protoheme IX farnesyltransferase subfamily. Interacts with CtaA.

The protein resides in the cell membrane. It carries out the reaction heme b + (2E,6E)-farnesyl diphosphate + H2O = Fe(II)-heme o + diphosphate. The protein operates within porphyrin-containing compound metabolism; heme O biosynthesis; heme O from protoheme: step 1/1. Its function is as follows. Converts heme B (protoheme IX) to heme O by substitution of the vinyl group on carbon 2 of heme B porphyrin ring with a hydroxyethyl farnesyl side group. The sequence is that of Protoheme IX farnesyltransferase 1 from Lysinibacillus sphaericus (strain C3-41).